The chain runs to 362 residues: 3-dehydroquinate synthase (362 aa).

Residues 71–76 (DGEQYK), 105–109 (GVIGD), 129–130 (TT), Lys142, Lys151, and 169–172 (CLKT) contribute to the NAD(+) site. Residues Glu184, His247, and His264 each coordinate Zn(2+).

This sequence belongs to the sugar phosphate cyclases superfamily. Dehydroquinate synthase family. NAD(+) serves as cofactor. It depends on Co(2+) as a cofactor. The cofactor is Zn(2+).

Its subcellular location is the cytoplasm. The catalysed reaction is 7-phospho-2-dehydro-3-deoxy-D-arabino-heptonate = 3-dehydroquinate + phosphate. It functions in the pathway metabolic intermediate biosynthesis; chorismate biosynthesis; chorismate from D-erythrose 4-phosphate and phosphoenolpyruvate: step 2/7. Functionally, catalyzes the conversion of 3-deoxy-D-arabino-heptulosonate 7-phosphate (DAHP) to dehydroquinate (DHQ). The chain is 3-dehydroquinate synthase from Salmonella typhi.